A 275-amino-acid chain; its full sequence is Uridine-5'-phosphate dioxygenase (275 aa).

Residues H105, D107, and H247 each coordinate Fe cation.

Fe(2+) is required as a cofactor.

It catalyses the reaction UMP + 2-oxoglutarate + O2 = uridine-5'-aldehyde + succinate + phosphate + CO2. Its pathway is antibiotic biosynthesis. With respect to regulation, enhanced by ascorbic acid and inhibited by Zn(2+). Its function is as follows. Dioxygenase involved in the biosynthesis of the capuramycin-type nucleoside antibiotic A-102395. Catalyzes the dephosphorylation and oxidation of UMP to generate uridine-5'-aldehyde. Can also use the alternative alpha-keto acids pyruvate and alpha-ketoadipate (2-oxoadipate), with very low efficiency. Cannot use alpha-ketobutyrate, alpha-ketovalerate and oxaloacetate. The sequence is that of Uridine-5'-phosphate dioxygenase from Amycolatopsis sp.